Here is a 157-residue protein sequence, read N- to C-terminus: Glutathione peroxidase (157 aa).

Cys35 is an active-site residue.

This sequence belongs to the glutathione peroxidase family.

The enzyme catalyses 2 glutathione + H2O2 = glutathione disulfide + 2 H2O. In Lactococcus lactis subsp. cremoris (strain MG1363), this protein is Glutathione peroxidase (gpo).